Reading from the N-terminus, the 267-residue chain is Phosphatidylglycerol--prolipoprotein diacylglyceryl transferase (267 aa).

The next 3 membrane-spanning stretches (helical) occupy residues 18 to 38, 57 to 77, and 95 to 115; these read LSVR…MWFA, FLFY…VLFY, and GGMS…IFAW. Arg140 contacts a 1,2-diacyl-sn-glycero-3-phospho-(1'-sn-glycerol). Transmembrane regions (helical) follow at residues 173 to 193, 200 to 220, and 233 to 253; these read SQLY…QWFI, GSVA…IEYF, and FISM…GLLI.

Belongs to the Lgt family.

It localises to the cell inner membrane. It carries out the reaction L-cysteinyl-[prolipoprotein] + a 1,2-diacyl-sn-glycero-3-phospho-(1'-sn-glycerol) = an S-1,2-diacyl-sn-glyceryl-L-cysteinyl-[prolipoprotein] + sn-glycerol 1-phosphate + H(+). It participates in protein modification; lipoprotein biosynthesis (diacylglyceryl transfer). Its function is as follows. Catalyzes the transfer of the diacylglyceryl group from phosphatidylglycerol to the sulfhydryl group of the N-terminal cysteine of a prolipoprotein, the first step in the formation of mature lipoproteins. The chain is Phosphatidylglycerol--prolipoprotein diacylglyceryl transferase from Pseudoalteromonas translucida (strain TAC 125).